The chain runs to 243 residues: Homeobox protein goosecoid isoform A (243 aa).

Residues 148–207 constitute a DNA-binding region (homeobox); sequence KRRHRTIFTDEQLEALENLFQETKYPDVGTREQLARRVHLREEKVEVWFKNRRAKWRRQK. Residues 201-243 form a disordered region; it reads AKWRRQKRSSSEESENAQKWNKSSKNSAEKADEQVKSDLDSDS. The span at 217-226 shows a compositional bias: polar residues; sequence AQKWNKSSKN. A compositionally biased stretch (basic and acidic residues) spans 227–243; that stretch reads SAEKADEQVKSDLDSDS.

It belongs to the paired homeobox family. Bicoid subfamily. As to expression, at the start of gastrulation, it is found in a patch of cells encompassing 60 degrees of arc on the dorsal marginal zone.

Its subcellular location is the nucleus. Its function is as follows. Plays a central role in executing Spemann's organizer phenomenon (the dorsal blastopore lip of the early Xenopus laevis gastrula can organize a complete secondary body axis when transplanted to another embryo). This chain is Homeobox protein goosecoid isoform A (gsc-a), found in Xenopus laevis (African clawed frog).